A 96-amino-acid polypeptide reads, in one-letter code: Small ribosomal subunit protein bS20 (96 aa).

This sequence belongs to the bacterial ribosomal protein bS20 family.

In terms of biological role, binds directly to 16S ribosomal RNA. This is Small ribosomal subunit protein bS20 from Thermotoga petrophila (strain ATCC BAA-488 / DSM 13995 / JCM 10881 / RKU-1).